Reading from the N-terminus, the 302-residue chain is Oxygen-dependent coproporphyrinogen-III oxidase (302 aa).

A substrate-binding site is contributed by serine 94. The a divalent metal cation site is built by histidine 98 and histidine 108. Histidine 108 serves as the catalytic Proton donor. Asparagine 110 to arginine 112 provides a ligand contact to substrate. 2 residues coordinate a divalent metal cation: histidine 147 and histidine 177. The interval tyrosine 242–glutamine 277 is important for dimerization. Glycine 260 to arginine 262 lines the substrate pocket.

Belongs to the aerobic coproporphyrinogen-III oxidase family. As to quaternary structure, homodimer. It depends on a divalent metal cation as a cofactor.

Its subcellular location is the cytoplasm. The enzyme catalyses coproporphyrinogen III + O2 + 2 H(+) = protoporphyrinogen IX + 2 CO2 + 2 H2O. It participates in porphyrin-containing compound metabolism; protoporphyrin-IX biosynthesis; protoporphyrinogen-IX from coproporphyrinogen-III (O2 route): step 1/1. In terms of biological role, involved in the heme biosynthesis. Catalyzes the aerobic oxidative decarboxylation of propionate groups of rings A and B of coproporphyrinogen-III to yield the vinyl groups in protoporphyrinogen-IX. This is Oxygen-dependent coproporphyrinogen-III oxidase from Shewanella baltica (strain OS155 / ATCC BAA-1091).